Here is a 425-residue protein sequence, read N- to C-terminus: Bifunctional phosphoribosylaminoimidazole carboxylase/phosphoribosylaminoimidazole succinocarboxamide synthetase (425 aa).

N-acetylalanine is present on A2. The segment at A2–L260 is SAICAR synthetase domain. Y22 bears the Phosphotyrosine mark. An N6-acetyllysine modification is found at K36. Phosphoserine is present on S107. T238 carries the post-translational modification Phosphothreonine. K247 carries the N6-acetyllysine modification. The tract at residues K261–C266 is linker. An AIR carboxylase domain region spans residues R267–L425. S274 carries the post-translational modification Phosphoserine. S332 lines the CO2 pocket.

It in the N-terminal section; belongs to the SAICAR synthetase family. The protein in the C-terminal section; belongs to the AIR carboxylase family. Class II subfamily. As to quaternary structure, homooctamer.

It carries out the reaction 5-amino-1-(5-phospho-D-ribosyl)imidazole-4-carboxylate + L-aspartate + ATP = (2S)-2-[5-amino-1-(5-phospho-beta-D-ribosyl)imidazole-4-carboxamido]succinate + ADP + phosphate + 2 H(+). The enzyme catalyses 5-amino-1-(5-phospho-D-ribosyl)imidazole-4-carboxylate + H(+) = 5-amino-1-(5-phospho-beta-D-ribosyl)imidazole + CO2. The protein operates within purine metabolism; IMP biosynthesis via de novo pathway; 5-amino-1-(5-phospho-D-ribosyl)imidazole-4-carboxamide from 5-amino-1-(5-phospho-D-ribosyl)imidazole-4-carboxylate: step 1/2. It participates in purine metabolism; IMP biosynthesis via de novo pathway; 5-amino-1-(5-phospho-D-ribosyl)imidazole-4-carboxylate from 5-amino-1-(5-phospho-D-ribosyl)imidazole (carboxylase route): step 1/1. Its function is as follows. Bifunctional phosphoribosylaminoimidazole carboxylase and phosphoribosylaminoimidazole succinocarboxamide synthetase catalyzing two reactions of the de novo purine biosynthetic pathway. In Mus musculus (Mouse), this protein is Bifunctional phosphoribosylaminoimidazole carboxylase/phosphoribosylaminoimidazole succinocarboxamide synthetase.